The primary structure comprises 323 residues: Protein SopB (323 aa).

The segment at 1–20 (MKRAPVIPKHTLNTQPVEDT) is disordered. Residues 11–20 (TLNTQPVEDT) show a composition bias toward polar residues. Positions 180 to 199 (SALADAENISRKIITRCINT) form a DNA-binding region, H-T-H motif.

The protein belongs to the ParB family.

Functionally, control of plasmid partitioning; required to recognize the cis-acting. Binds specifically with the DNA segment containing the sopC region. SopB is trans-acting. This Escherichia coli O157:H7 protein is Protein SopB (sopB).